The chain runs to 550 residues: Membrane-bound alkaline phosphatase (550 aa).

Residues 1–39 (MSTWWLVVVAAAAAAGLVRAEDRYHPERLAAGEASAATR) form the signal peptide. Asp83 is a binding site for Mg(2+). Position 83 (Asp83) interacts with Zn(2+). The active-site Phosphoserine intermediate is the Ser133. 3 residues coordinate Mg(2+): His196, Ser198, and Glu356. Positions 361, 365, 402, 403, and 479 each coordinate Zn(2+). A lipid anchor (GPI-anchor amidated serine) is attached at Ser524. Residues 525–550 (AATVPTAALLSLLLAAFITLRHQCFL) constitute a propeptide, removed in mature form.

It belongs to the alkaline phosphatase family. Mg(2+) is required as a cofactor. The cofactor is Zn(2+). In terms of tissue distribution, midgut.

Its subcellular location is the cell membrane. The catalysed reaction is a phosphate monoester + H2O = an alcohol + phosphate. The chain is Membrane-bound alkaline phosphatase (Alp-m) from Bombyx mori (Silk moth).